Reading from the N-terminus, the 283-residue chain is Polyamine aminopropyltransferase (283 aa).

Residues 5–238 enclose the PABS domain; the sequence is STWIDEYHKG…GIWSWTFASE (234 aa). Position 32 (Q32) interacts with S-methyl-5'-thioadenosine. Spermidine-binding residues include H63 and D87. Residues E107 and 139 to 140 each bind S-methyl-5'-thioadenosine; that span reads DG. Catalysis depends on D158, which acts as the Proton acceptor. 158–161 is a spermidine binding site; that stretch reads DCSD.

Belongs to the spermidine/spermine synthase family. As to quaternary structure, homodimer or homotetramer.

It is found in the cytoplasm. The enzyme catalyses S-adenosyl 3-(methylsulfanyl)propylamine + putrescine = S-methyl-5'-thioadenosine + spermidine + H(+). It functions in the pathway amine and polyamine biosynthesis; spermidine biosynthesis; spermidine from putrescine: step 1/1. In terms of biological role, catalyzes the irreversible transfer of a propylamine group from the amino donor S-adenosylmethioninamine (decarboxy-AdoMet) to putrescine (1,4-diaminobutane) to yield spermidine. The polypeptide is Polyamine aminopropyltransferase (Prochlorococcus marinus (strain MIT 9312)).